The following is a 431-amino-acid chain: Phosphoribosylamine--glycine ligase (431 aa).

An ATP-grasp domain is found at 108–315 (KDFLARHKIP…LVLLIEAALA (208 aa)). 134-195 (LREKGAPIVI…EEFLDGEEAS (62 aa)) contributes to the ATP binding site. The Mg(2+) site is built by glutamate 285 and asparagine 287.

Belongs to the GARS family. The cofactor is Mg(2+). Mn(2+) is required as a cofactor.

The enzyme catalyses 5-phospho-beta-D-ribosylamine + glycine + ATP = N(1)-(5-phospho-beta-D-ribosyl)glycinamide + ADP + phosphate + H(+). It participates in purine metabolism; IMP biosynthesis via de novo pathway; N(1)-(5-phospho-D-ribosyl)glycinamide from 5-phospho-alpha-D-ribose 1-diphosphate: step 2/2. This Pseudomonas syringae pv. tomato (strain ATCC BAA-871 / DC3000) protein is Phosphoribosylamine--glycine ligase.